The chain runs to 141 residues: Large ribosomal subunit protein uL16 (141 aa).

Belongs to the universal ribosomal protein uL16 family. As to quaternary structure, part of the 50S ribosomal subunit.

Binds 23S rRNA and is also seen to make contacts with the A and possibly P site tRNAs. This Rhodospirillum centenum (strain ATCC 51521 / SW) protein is Large ribosomal subunit protein uL16.